Reading from the N-terminus, the 657-residue chain is tRNA 5-methylaminomethyl-2-thiouridine biosynthesis bifunctional protein MnmC (657 aa).

The tRNA (mnm(5)s(2)U34)-methyltransferase stretch occupies residues 1–236; it reads MPDRLVPATL…KRAMLVGEYA (236 aa). The segment at 261-657 is FAD-dependent cmnm(5)s(2)U34 oxidoreductase; sequence IGAGVAGCAV…LRARQVSAAD (397 aa).

It in the N-terminal section; belongs to the methyltransferase superfamily. tRNA (mnm(5)s(2)U34)-methyltransferase family. The protein in the C-terminal section; belongs to the DAO family. It depends on FAD as a cofactor.

The protein resides in the cytoplasm. The catalysed reaction is 5-aminomethyl-2-thiouridine(34) in tRNA + S-adenosyl-L-methionine = 5-methylaminomethyl-2-thiouridine(34) in tRNA + S-adenosyl-L-homocysteine + H(+). Catalyzes the last two steps in the biosynthesis of 5-methylaminomethyl-2-thiouridine (mnm(5)s(2)U) at the wobble position (U34) in tRNA. Catalyzes the FAD-dependent demodification of cmnm(5)s(2)U34 to nm(5)s(2)U34, followed by the transfer of a methyl group from S-adenosyl-L-methionine to nm(5)s(2)U34, to form mnm(5)s(2)U34. This Burkholderia multivorans (strain ATCC 17616 / 249) protein is tRNA 5-methylaminomethyl-2-thiouridine biosynthesis bifunctional protein MnmC.